The sequence spans 525 residues: MAEIKPAEISAILKKQVEGFESGATLEEVGSVLQVGDGIARIYGLSNVQYGELVEFDNGLEGIVLNLEEDNVGVVLLGASTGIKEGSTAKRTQRIASLKVGEQMVGRVVNTLGFPIDGKGPIGGDLYEMPLERKAPGVIFRQPVTEPLQTGIKAVDAMIPVGRGQRELVIGDRQTGKSTVCIDTILNQKEFYDAGKPVFCIYVAIGQKASTVAGIAKMLEEKGAMAYTVIVAANASDPAPMQVYAPMAGAAIGEYFRDSGRPALIVYDDLSKQAVAYREVSLLLRRPPGREAYPGDVFYLHSRLLERACKVIADDDIAKNMNDLPDSLKSIVKGGGSLTALPIIETQAGDVSAYIPTNVISITDGQIFLDGDLFNSGVRPAINVGISVSRVGGNAQIKSMKKVAGTLKLDQAQFRELEAFAKFGSDLDAVTLNVIEKGKRNVEILKQGLNSPYTVEDQVAIIYAGSKNLLKNVPVNKVREFEKDFIEYLNNKHRDTLDALKAGKLDDKITDVIEATAKELSAKYN.

An ATP-binding site is contributed by 171–178 (GDRQTGKS).

This sequence belongs to the ATPase alpha/beta chains family. In terms of assembly, F-type ATPases have 2 components, CF(1) - the catalytic core - and CF(0) - the membrane proton channel. CF(1) has five subunits: alpha(3), beta(3), gamma(1), delta(1), epsilon(1). CF(0) has three main subunits: a(1), b(2) and c(9-12). The alpha and beta chains form an alternating ring which encloses part of the gamma chain. CF(1) is attached to CF(0) by a central stalk formed by the gamma and epsilon chains, while a peripheral stalk is formed by the delta and b chains.

The protein resides in the cell inner membrane. The catalysed reaction is ATP + H2O + 4 H(+)(in) = ADP + phosphate + 5 H(+)(out). In terms of biological role, produces ATP from ADP in the presence of a proton gradient across the membrane. The alpha chain is a regulatory subunit. The polypeptide is ATP synthase subunit alpha (Flavobacterium psychrophilum (strain ATCC 49511 / DSM 21280 / CIP 103535 / JIP02/86)).